Reading from the N-terminus, the 465-residue chain is G1/S-specific cyclin CLN3 (465 aa).

In terms of domain architecture, Cyclin N-terminal spans 44–171 (EMLHHLLSVE…HILKSLEWVV (128 aa)).

Belongs to the cyclin family. Interacts with CDC28 and SLA1. In terms of processing, hyperphosphorylated. GRR1 preferentially mediates the degradation of hyperphosphorylated CLN3.

Its function is as follows. G1/S-specific cyclin essential for the control of the cell cycle at the G1/S (start) transition. CLN3 may be an upstream activator of the G1 cyclins which directly catalyze start. Required for budding and for cell cycle progression and morphogenesis in environment-induced hyphae. Degradation is mediated by GRR1. Through binding to CDC28, controls the phosphorylation of SLA1 which regulates cortical actin patch dynamics. This chain is G1/S-specific cyclin CLN3 (CLN3), found in Candida albicans (strain SC5314 / ATCC MYA-2876) (Yeast).